Consider the following 412-residue polypeptide: MDRHLCTCRETQLRSGLLLPLFLLMMLADLTLPAQRHPPVVLVPGDLGNQLEAKLDKPKVVHYLCSKKTDSYFTLWLNLELLLPVIIDCWIDNIRLVYNRTSRATQFPDGVDVRVPGFGETFSMEFLDPSKRNVGSYFYTMVESLVGWGYTRGEDVRGAPYDWRRAPNENGPYFLALREMIEEMYQMYGGPVVLVAHSMGNVYMLYFLQRQPQVWKDKYIHAFVSLGAPWGGVAKTLRVLASGDNNRIPVIGPLKIREQQRSAVSTSWLLPYNHTWSHEKVFVYTPTTNYTLRDYHRFFRDIGFEDGWFMRQDTEGLVEAMTPPGVELHCLYGTGVPTPNSFYYESFPDRDPKICFGDGDGTVNLESVLQCQAWQSRQEHRVSLQELPGSEHIEMLANATTLAYLKRVLLEP.

The signal sequence occupies residues 1–33; it reads MDRHLCTCRETQLRSGLLLPLFLLMMLADLTLP. Asp-46 is a substrate binding site. A disulfide bridge connects residues Cys-65 and Cys-89. N-linked (GlcNAc...) asparagine glycosylation is present at Asn-99. Ser-198 functions as the Acyl-ester intermediate in the catalytic mechanism. Residue Ser-198 participates in Zn(2+) binding. Met-199 serves as a coordination point for substrate. Residues Asn-273 and Asn-289 are each glycosylated (N-linked (GlcNAc...) asparagine). Cys-355 contacts Zn(2+). Residues Asp-360 and His-392 each act as charge relay system in the active site. Zn(2+) is bound at residue His-392. Asn-398 carries N-linked (GlcNAc...) asparagine glycosylation.

This sequence belongs to the AB hydrolase superfamily. Lipase family. In terms of processing, N-glycosylated. N-glycosylation is important for maturation of the enzyme and normal subcellular location. In terms of tissue distribution, detected in blood plasma. Detected in alveolar macrophages (at protein level). Detected in heart, liver, spleen, kidney, thymus, brain and lung.

The protein localises to the secreted. Its subcellular location is the lysosome. It localises to the membrane. The catalysed reaction is a 1,2-diacyl-sn-glycero-3-phosphocholine + H2O = a 2-acyl-sn-glycero-3-phosphocholine + a fatty acid + H(+). It catalyses the reaction 1-hexadecanoyl-2-(9Z-octadecenoyl)-sn-glycero-3-phosphocholine + H2O = 2-(9Z-octadecenoyl)-sn-glycero-3-phosphocholine + hexadecanoate + H(+). The enzyme catalyses 1,2-di-(9Z-octadecenoyl)-sn-glycero-3-phosphocholine + H2O = 2-(9Z-octadecenoyl)-sn-glycero-3-phosphocholine + (9Z)-octadecenoate + H(+). It carries out the reaction 1-hexadecanoyl-2-glutaroyl-sn-glycero-3-phosphocholine + H2O = 2-glutaroyl-sn-glycero-3-phosphocholine + hexadecanoate + H(+). The catalysed reaction is 1-hexadecanoyl-2-nonadioyl-sn-glycero-3-phosphocholine + H2O = 2-nonadioyl-sn-glycero-3-phosphocholine + hexadecanoate + H(+). It catalyses the reaction 1-hexadecanoyl-2-(5-oxopentanoyl)-sn-glycero-3-phosphocholine + H2O = 2-(5-oxopentanoyl)-sn-glycero-3-phosphocholine + hexadecanoate + H(+). The enzyme catalyses 1-hexadecanoyl-2-(9-oxononanoyl)-sn-glycero-3-phosphocholine + H2O = 2-(9-oxononanoyl)-sn-glycero-3-phosphocholine + hexadecanoate + H(+). It carries out the reaction 1,2-dihexadecanoyl-sn-glycero-3-phosphocholine + H2O = 2-hexadecanoyl-sn-glycero-3-phosphocholine + hexadecanoate + H(+). The catalysed reaction is a 1,2-diacyl-sn-glycero-3-phosphocholine + H2O = a 1-acyl-sn-glycero-3-phosphocholine + a fatty acid + H(+). It catalyses the reaction 1-hexadecanoyl-2-(9Z-octadecenoyl)-sn-glycero-3-phosphocholine + H2O = 1-hexadecanoyl-sn-glycero-3-phosphocholine + (9Z)-octadecenoate + H(+). The enzyme catalyses 1,2-di-(9Z-octadecenoyl)-sn-glycero-3-phosphocholine + H2O = 1-(9Z-octadecenoyl)-sn-glycero-3-phosphocholine + (9Z)-octadecenoate + H(+). It carries out the reaction 1,2-dihexadecanoyl-sn-glycero-3-phosphocholine + H2O = 1-hexadecanoyl-sn-glycero-3-phosphocholine + hexadecanoate + H(+). The catalysed reaction is a 1-acyl-sn-glycero-3-phosphocholine + H2O = sn-glycerol 3-phosphocholine + a fatty acid + H(+). It catalyses the reaction 1-hexadecanoyl-sn-glycero-3-phosphocholine + H2O = sn-glycerol 3-phosphocholine + hexadecanoate + H(+). The enzyme catalyses N-(acetyl)-sphing-4-enine + a 1,2-diacyl-sn-glycero-3-phosphoethanolamine = 1-O-acyl-N-(acetyl)-sphing-4-enine + a 2-acyl-sn-glycero-3-phosphoethanolamine. It carries out the reaction 1-hexadecanoyl-2-(9Z-octadecenoyl)-sn-glycero-3-phosphoethanolamine + N-(acetyl)-sphing-4-enine = 2-(9Z-octadecenoyl)-sn-glycero-3-phosphoethanolamine + 1-hexadecanoyl-N-(acetyl)-sphing-4-enine. The catalysed reaction is 1-hexadecanoyl-2-(9Z,12Z-octadecadienoyl)-sn-glycero-3-phosphoethanolamine + N-(acetyl)-sphing-4-enine = 2-(9Z,12Z)-octadecadienoyl-sn-glycero-3-phosphoethanolamine + 1-hexadecanoyl-N-(acetyl)-sphing-4-enine. It catalyses the reaction 1-hexadecanoyl-2-(5Z,8Z,11Z,14Z-eicosatetraenoyl)-sn-glycero-3-phosphoethanolamine + N-(acetyl)-sphing-4-enine = 2-(5Z,8Z,11Z,14Z)-eicosatetraenoyl-sn-glycero-3-phosphoethanolamine + 1-hexadecanoyl-N-(acetyl)-sphing-4-enine. The enzyme catalyses N-(acetyl)-sphing-4-enine + a 1,2-diacyl-sn-glycero-3-phosphoethanolamine = 1-O-acyl-N-(acetyl)-sphing-4-enine + a 1-acyl-sn-glycero-3-phosphoethanolamine. It carries out the reaction 1-hexadecanoyl-2-(9Z-octadecenoyl)-sn-glycero-3-phosphoethanolamine + N-(acetyl)-sphing-4-enine = 1-(9Z-octadecenoyl)-N-(acetyl)-sphing-4-enine + 1-hexadecanoyl-sn-glycero-3-phosphoethanolamine. The catalysed reaction is 1-hexadecanoyl-2-(9Z,12Z-octadecadienoyl)-sn-glycero-3-phosphoethanolamine + N-(acetyl)-sphing-4-enine = 1-(9Z,12Z-octadecadienoyl)-N-acetylsphing-4-enine + 1-hexadecanoyl-sn-glycero-3-phosphoethanolamine. It catalyses the reaction 1-hexadecanoyl-2-(5Z,8Z,11Z,14Z-eicosatetraenoyl)-sn-glycero-3-phosphoethanolamine + N-(acetyl)-sphing-4-enine = 1-(5Z,8Z,11Z,14Z)-eicosatetraenoyl-N-(acetyl)-sphing-4-enine + 1-hexadecanoyl-sn-glycero-3-phosphoethanolamine. The enzyme catalyses N-(acetyl)-sphing-4-enine + a 1,2-diacyl-sn-glycero-3-phosphocholine = 1-O-acyl-N-(acetyl)-sphing-4-enine + a 2-acyl-sn-glycero-3-phosphocholine. It carries out the reaction 1-hexadecanoyl-2-(9Z-octadecenoyl)-sn-glycero-3-phosphocholine + N-(acetyl)-sphing-4-enine = 1-hexadecanoyl-N-(acetyl)-sphing-4-enine + 2-(9Z-octadecenoyl)-sn-glycero-3-phosphocholine. The catalysed reaction is 1-hexadecanoyl-2-(9Z,12Z-octadecadienoyl)-sn-glycero-3-phosphocholine + N-(acetyl)-sphing-4-enine = 2-(9Z,12Z-octadecadienoyl)-sn-glycero-3-phosphocholine + 1-hexadecanoyl-N-(acetyl)-sphing-4-enine. It catalyses the reaction 1-hexadecanoyl-2-(5Z,8Z,11Z,14Z-eicosatetraenoyl)-sn-glycero-3-phosphocholine + N-(acetyl)-sphing-4-enine = 1-hexadecanoyl-N-(acetyl)-sphing-4-enine + 2-(5Z,8Z,11Z,14Z)-eicosatetraenoyl-sn-glycero-3-phosphocholine. The enzyme catalyses 1-hexadecanoyl-2-(4Z,7Z,10Z,13Z,16Z,19Z-docosahexaenoyl)-sn-glycero-3-phosphocholine + N-(acetyl)-sphing-4-enine = 2-(4Z,7Z,10Z,13Z,16Z,19Z-docosahexaenoyl)-sn-glycero-3-phosphocholine + 1-hexadecanoyl-N-(acetyl)-sphing-4-enine. It carries out the reaction 1-hexadecanoyl-2-nonadioyl-sn-glycero-3-phosphocholine + N-(acetyl)-sphing-4-enine = 2-nonadioyl-sn-glycero-3-phosphocholine + 1-hexadecanoyl-N-(acetyl)-sphing-4-enine. The catalysed reaction is 1-octadecanoyl-2-(9Z-octadecenoyl)-sn-glycero-3-phosphocholine + N-(acetyl)-sphing-4-enine = 1-octadecanoyl-N-(acetyl)-sphing-4-enine + 2-(9Z-octadecenoyl)-sn-glycero-3-phosphocholine. It catalyses the reaction 1-(9Z)-octadecenoyl-2-octadecanoyl-sn-glycero-3-phosphocholine + N-(acetyl)-sphing-4-enine = 2-octadecanoyl-sn-glycero-3-phosphocholine + 1-(9Z-octadecenoyl)-N-(acetyl)-sphing-4-enine. The enzyme catalyses 1-octadecanoyl-2-(5Z,8Z,11Z,14Z-eicosatetraenoyl)-sn-glycero-3-phosphocholine + N-(acetyl)-sphing-4-enine = 1-octadecanoyl-N-(acetyl)-sphing-4-enine + 2-(5Z,8Z,11Z,14Z)-eicosatetraenoyl-sn-glycero-3-phosphocholine. It carries out the reaction 1-(9Z-octadecenoyl)-2-hexadecanoyl-sn-glycero-3-phosphocholine + N-(acetyl)-sphing-4-enine = 1-(9Z-octadecenoyl)-N-(acetyl)-sphing-4-enine + 2-hexadecanoyl-sn-glycero-3-phosphocholine. The catalysed reaction is N-(acetyl)-sphing-4-enine + a 1,2-diacyl-sn-glycero-3-phosphocholine = 1-O-acyl-N-(acetyl)-sphing-4-enine + a 1-acyl-sn-glycero-3-phosphocholine. It catalyses the reaction 1-hexadecanoyl-2-(9Z-octadecenoyl)-sn-glycero-3-phosphocholine + N-(acetyl)-sphing-4-enine = 1-(9Z-octadecenoyl)-N-(acetyl)-sphing-4-enine + 1-hexadecanoyl-sn-glycero-3-phosphocholine. The enzyme catalyses 1-hexadecanoyl-2-(9Z,12Z-octadecadienoyl)-sn-glycero-3-phosphocholine + N-(acetyl)-sphing-4-enine = 1-(9Z,12Z-octadecadienoyl)-N-acetylsphing-4-enine + 1-hexadecanoyl-sn-glycero-3-phosphocholine. It carries out the reaction 1-hexadecanoyl-2-(5Z,8Z,11Z,14Z-eicosatetraenoyl)-sn-glycero-3-phosphocholine + N-(acetyl)-sphing-4-enine = 1-(5Z,8Z,11Z,14Z)-eicosatetraenoyl-N-(acetyl)-sphing-4-enine + 1-hexadecanoyl-sn-glycero-3-phosphocholine. The catalysed reaction is 1-hexadecanoyl-2-(4Z,7Z,10Z,13Z,16Z,19Z-docosahexaenoyl)-sn-glycero-3-phosphocholine + N-(acetyl)-sphing-4-enine = 1-(4Z,7Z,10Z,13Z,16Z,19Z-docosahexaenoyl)-N-(acetyl)-sphing-4-enine + 1-hexadecanoyl-sn-glycero-3-phosphocholine. It catalyses the reaction 1-octadecanoyl-2-(9Z-octadecenoyl)-sn-glycero-3-phosphocholine + N-(acetyl)-sphing-4-enine = 1-(9Z-octadecenoyl)-N-(acetyl)-sphing-4-enine + 1-octadecanoyl-sn-glycero-3-phosphocholine. The enzyme catalyses 1-octadecanoyl-2-(9Z,12Z)-octadecadienoyl-sn-glycero-3-phosphocholine + N-(acetyl)-sphing-4-enine = 1-(9Z,12Z-octadecadienoyl)-N-acetylsphing-4-enine + 1-octadecanoyl-sn-glycero-3-phosphocholine. It carries out the reaction 1-(9Z-octadecenoyl)-2-hexadecanoyl-sn-glycero-3-phosphocholine + N-(acetyl)-sphing-4-enine = 1-hexadecanoyl-N-(acetyl)-sphing-4-enine + 1-(9Z-octadecenoyl)-sn-glycero-3-phosphocholine. The catalysed reaction is 1-(9Z)-octadecenoyl-2-octadecanoyl-sn-glycero-3-phosphocholine + N-(acetyl)-sphing-4-enine = 1-octadecanoyl-N-(acetyl)-sphing-4-enine + 1-(9Z-octadecenoyl)-sn-glycero-3-phosphocholine. It catalyses the reaction 1,2-di-(9Z-octadecenoyl)-sn-glycero-3-phosphocholine + N-(acetyl)-sphing-4-enine = 1-(9Z-octadecenoyl)-N-(acetyl)-sphing-4-enine + 1-(9Z-octadecenoyl)-sn-glycero-3-phosphocholine. The enzyme catalyses 1-octadecanoyl-2-(5Z,8Z,11Z,14Z-eicosatetraenoyl)-sn-glycero-3-phosphocholine + N-(acetyl)-sphing-4-enine = 1-(5Z,8Z,11Z,14Z)-eicosatetraenoyl-N-(acetyl)-sphing-4-enine + 1-octadecanoyl-sn-glycero-3-phosphocholine. It carries out the reaction a 1,2-diacyl-sn-glycero-3-phospho-L-serine + N-(acetyl)-sphing-4-enine = a 2-acyl-sn-glycero-3-phospho-L-serine + 1-O-acyl-N-(acetyl)-sphing-4-enine. The catalysed reaction is 1-octadecanoyl-2-(9Z-octadecenoyl)-sn-glycero-3-phospho-L-serine + N-(acetyl)-sphing-4-enine = 2-(9Z-octadecenoyl)-sn-glycero-3-phospho-L-serine + 1-octadecanoyl-N-(acetyl)-sphing-4-enine. It catalyses the reaction a 1,2-diacyl-sn-glycero-3-phospho-L-serine + N-(acetyl)-sphing-4-enine = 1-O-acyl-N-(acetyl)-sphing-4-enine + a 1-acyl-sn-glycero-3-phospho-L-serine. The enzyme catalyses 1-octadecanoyl-2-(9Z-octadecenoyl)-sn-glycero-3-phospho-L-serine + N-(acetyl)-sphing-4-enine = 1-octadecanoyl-sn-glycero-3-phosphoserine + 1-(9Z-octadecenoyl)-N-(acetyl)-sphing-4-enine. It carries out the reaction a 1,2-diacyl-sn-glycero-3-phospho-(1'-sn-glycerol) + N-(acetyl)-sphing-4-enine = 2-acyl-sn-glycero-3-phospho-(1'-sn-glycerol) + 1-O-acyl-N-(acetyl)-sphing-4-enine. The catalysed reaction is 1-octadecanoyl-2-(9Z-octadecenoyl)-sn-glycero-3-phospho-(1'-sn-glycerol) + N-(acetyl)-sphing-4-enine = 2-(9Z-octadecenoyl)-sn-glycero-3-phospho-(1'-sn-glycerol) + 1-octadecanoyl-N-(acetyl)-sphing-4-enine. It catalyses the reaction a 1,2-diacyl-sn-glycero-3-phospho-(1'-sn-glycerol) + N-(acetyl)-sphing-4-enine = 1-O-acyl-N-(acetyl)-sphing-4-enine + 1-acyl-sn-glycero-3-phospho-(1'-sn-glycerol). The enzyme catalyses 1-octadecanoyl-2-(9Z-octadecenoyl)-sn-glycero-3-phospho-(1'-sn-glycerol) + N-(acetyl)-sphing-4-enine = 1-octadecanoyl-sn-glycero-3-phospho-(1'-sn-glycerol) + 1-(9Z-octadecenoyl)-N-(acetyl)-sphing-4-enine. It carries out the reaction an N-acylethanolamine + a 1,2-diacyl-sn-glycero-3-phosphocholine = 2-(acylamino)ethyl fatty acid + a 2-acyl-sn-glycero-3-phosphocholine. The catalysed reaction is an N-acylethanolamine + a 1,2-diacyl-sn-glycero-3-phosphocholine = 2-(acylamino)ethyl fatty acid + a 1-acyl-sn-glycero-3-phosphocholine. It catalyses the reaction N-(5Z,8Z,11Z,14Z-eicosatetraenoyl)-ethanolamine + 1,2-di-(9Z-octadecenoyl)-sn-glycero-3-phosphocholine = 2-[(5Z,8Z,11Z,14Z)-eicosatetraenoylamino]ethyl (9Z)-octadecenoate + (9Z-octadecenoyl)-sn-glycero-3-phosphocholine. The enzyme catalyses N-(9Z-octadecenoyl) ethanolamine + 1,2-di-(9Z-octadecenoyl)-sn-glycero-3-phosphocholine = 2-[(9Z)-octadecenoylamino]ethyl (9Z)-octadecenoate + (9Z-octadecenoyl)-sn-glycero-3-phosphocholine. It carries out the reaction a 3-acyl-sn-glycerol + a 1,2-diacyl-sn-glycero-3-phosphocholine = a 1,3-diacylglycerol + a 1-acyl-sn-glycero-3-phosphocholine. The catalysed reaction is a 3-acyl-sn-glycerol + a 1,2-diacyl-sn-glycero-3-phosphocholine = a 1,3-diacylglycerol + a 2-acyl-sn-glycero-3-phosphocholine. It catalyses the reaction 3-(9Z-octadecenoyl)-sn-glycerol + 1,2-di-(9Z-octadecenoyl)-sn-glycero-3-phosphocholine = 1,3-di-(9Z-octadecenoyl)-glycerol + (9Z-octadecenoyl)-sn-glycero-3-phosphocholine. The enzyme catalyses 3-hexadecanoyl-sn-glycerol + 1,2-di-(9Z-octadecenoyl)-sn-glycero-3-phosphocholine = 1-(9Z)-octadecenoyl-3-hexadecanoyl-sn-glycerol + (9Z-octadecenoyl)-sn-glycero-3-phosphocholine. It carries out the reaction a 1-acyl-sn-glycerol + a 1,2-diacyl-sn-glycero-3-phosphocholine = a 1,3-diacylglycerol + a 2-acyl-sn-glycero-3-phosphocholine. The catalysed reaction is a 1-acyl-sn-glycerol + a 1,2-diacyl-sn-glycero-3-phosphocholine = a 1,3-diacylglycerol + a 1-acyl-sn-glycero-3-phosphocholine. It catalyses the reaction 1-(9Z-octadecenoyl)-sn-glycerol + 1,2-di-(9Z-octadecenoyl)-sn-glycero-3-phosphocholine = 1,3-di-(9Z-octadecenoyl)-glycerol + (9Z-octadecenoyl)-sn-glycero-3-phosphocholine. The enzyme catalyses 1-hexadecanoyl-sn-glycerol + 1,2-di-(9Z-octadecenoyl)-sn-glycero-3-phosphocholine = 1-hexadecanoyl-3-(9Z)-octadecenoyl-sn-glycerol + (9Z-octadecenoyl)-sn-glycero-3-phosphocholine. It carries out the reaction a 2-acylglycerol + a 1,2-diacyl-sn-glycero-3-phosphocholine = a 1,2-diacylglycerol + a 2-acyl-sn-glycero-3-phosphocholine. The catalysed reaction is a 2-acylglycerol + a 1,2-diacyl-sn-glycero-3-phosphocholine = a 1,2-diacylglycerol + a 1-acyl-sn-glycero-3-phosphocholine. It catalyses the reaction 2-hexadecanoylglycerol + 1,2-di-(9Z-octadecenoyl)-sn-glycero-3-phosphocholine = 1-(9Z)-octadecenoyl-2-hexadecanoylglycerol + (9Z-octadecenoyl)-sn-glycero-3-phosphocholine. The enzyme catalyses 1-O-alkylglycerol + a 1,2-diacyl-sn-glycero-3-phosphocholine = 1-O-alkyl-3-acylglycerol + a 1-acyl-sn-glycero-3-phosphocholine. It carries out the reaction 1-O-alkylglycerol + a 1,2-diacyl-sn-glycero-3-phosphocholine = 1-O-alkyl-3-acylglycerol + a 2-acyl-sn-glycero-3-phosphocholine. The catalysed reaction is 1-O-hexadecylglycerol + 1,2-di-(9Z-octadecenoyl)-sn-glycero-3-phosphocholine = 1-O-hexadecyl-3-(9Z)-octadecenoylglycerol + (9Z-octadecenoyl)-sn-glycero-3-phosphocholine. It catalyses the reaction 1-O-alkyl-2-acyl-sn-glycerol + a 1,2-diacyl-sn-glycero-3-phosphocholine = 1-O-alkyl-2,3-diacyl-sn-glycerol + a 2-acyl-sn-glycero-3-phosphocholine. The enzyme catalyses 1-O-alkyl-2-acyl-sn-glycerol + a 1,2-diacyl-sn-glycero-3-phosphocholine = 1-O-alkyl-2,3-diacyl-sn-glycerol + a 1-acyl-sn-glycero-3-phosphocholine. It carries out the reaction 1-O-hexadecyl-2-acetyl-sn-glycerol + 1,2-di-(9Z-octadecenoyl)-sn-glycero-3-phosphocholine = 1-O-hexadecyl-2-acetyl-3-(9Z)-octadecenoyl-sn-glycerol + (9Z-octadecenoyl)-sn-glycero-3-phosphocholine. The catalysed reaction is 1-O-hexadecyl-2-O-methyl-sn-glycerol + 1,2-di-(9Z-octadecenoyl)-sn-glycero-3-phosphocholine = 1-O-hexadecyl-2-O-methyl-3-(9Z)-octadecenoyl-sn-glycerol + (9Z-octadecenoyl)-sn-glycero-3-phosphocholine. It catalyses the reaction a 1,2-diacyl-sn-glycero-3-phosphoethanolamine + H2O = a 1-acyl-sn-glycero-3-phosphoethanolamine + a fatty acid + H(+). The enzyme catalyses 1-acyl-2-(5Z,8Z,11Z,14Z)-eicosatetraenoyl-sn-glycero-3-phosphoethanolamine + H2O = a 1-acyl-sn-glycero-3-phosphoethanolamine + (5Z,8Z,11Z,14Z)-eicosatetraenoate + H(+). It carries out the reaction a 1,2-diacyl-sn-glycero-3-phospho-(1'-sn-glycerol) + H2O = 1-acyl-sn-glycero-3-phospho-(1'-sn-glycerol) + a fatty acid + H(+). The catalysed reaction is 1-hexadecanoyl-2-(9Z-octadecenoyl)-sn-glycero-3-phospho-(1'-sn-glycerol) + H2O = 1-hexadecanoyl-sn-glycero-3-phospho-(1'-sn-glycerol) + (9Z)-octadecenoate + H(+). It catalyses the reaction a 1,2-diacyl-sn-glycero-3-phospho-(1'-sn-glycerol) + H2O = 2-acyl-sn-glycero-3-phospho-(1'-sn-glycerol) + a fatty acid + H(+). The enzyme catalyses 1-hexadecanoyl-2-(9Z-octadecenoyl)-sn-glycero-3-phospho-(1'-sn-glycerol) + H2O = 2-(9Z-octadecenoyl)-sn-glycero-3-phospho-(1'-sn-glycerol) + hexadecanoate + H(+). Its activity is regulated as follows. Phospholipase sn-2 versus sn-1 positional specificity is affected by the phospholipid composition of membranes. Phospholipase A2 activity toward 1-hexadecanoyl-2-(5Z,8Z,11Z,14Z-eicosatetraenoyl)-sn-glycero-3-phosphocholine (PAPE) is enhanced in the presence of 1,2-dioleoyl-sn-glycero-3-phosphocholine (DOPC), which promotes lipid bilayer formation. O-acyltransferase activity is inhibited by antiarrhythmic drug amiodarone. Has dual calcium-independent phospholipase and O-acyltransferase activities with a potential role in glycerophospholipid homeostasis and remodeling of acyl groups of lipophilic alcohols present in acidic cellular compartments. Catalyzes hydrolysis of the ester bond of the fatty acyl group attached at sn-1 or sn-2 position of phospholipids (phospholipase A1 or A2 activity) and transfer it to the hydroxyl group at the first carbon of lipophilic alcohols (O-acyltransferase activity). Among preferred fatty acyl donors are phosphatidylcholines, phosphatidylethanolamines, phosphatidylglycerols and phosphatidylserines. Favors sn-2 over sn-1 deacylation of unsaturated fatty acyl groups of phosphatidylcholines, phosphatidylethanolamines, and phosphatidylglycerols. Among preferred fatty acyl acceptors are natural lipophilic alcohols including short-chain ceramide N-acetyl-sphingosine (C2 ceramide), alkylacylglycerols, monoacylglycerols, and acylethanolamides such as anandamide and oleoylethanolamide. Selectively hydrolyzes the sn-1 fatty acyl group of truncated oxidized phospholipids and may play a role in detoxification of reactive oxidized phospholipids during oxidative stress. Required for normal phospholipid degradation in alveolar macrophages with potential implications in the clearance of pulmonary surfactant, which is mainly composed of dipalmitoylphosphatidylcholine (1,2-dihexadecanoyl-sn-glycero-3-phosphocholine). Involved in the first step of bis(monoacylglycero)phosphate (BMP) de novo synthesis from phosphatidylglycerol (1,2-diacyl-sn-glycero-3-phospho-(1'-sn-glycerol), PG). BMP is an important player in cargo sorting and degradation, regulation of cellular cholesterol levels and intercellular communication. At neutral pH, hydrolyzes the sn-1 fatty acyl group of the lysophosphatidylcholines. This chain is Lysosomal phospholipase A and acyltransferase, found in Mus musculus (Mouse).